Consider the following 365-residue polypeptide: Uroporphyrinogen decarboxylase (365 aa).

The span at 1-17 (MSANDSPSGQQTTTSAS) shows a compositional bias: polar residues. The tract at residues 1 to 20 (MSANDSPSGQQTTTSASLDA) is disordered. Substrate-binding positions include 48 to 52 (RQAGR), Asp97, Tyr172, Ser227, and His341.

It belongs to the uroporphyrinogen decarboxylase family. As to quaternary structure, homodimer.

Its subcellular location is the cytoplasm. The catalysed reaction is uroporphyrinogen III + 4 H(+) = coproporphyrinogen III + 4 CO2. It functions in the pathway porphyrin-containing compound metabolism; protoporphyrin-IX biosynthesis; coproporphyrinogen-III from 5-aminolevulinate: step 4/4. Its function is as follows. Catalyzes the decarboxylation of four acetate groups of uroporphyrinogen-III to yield coproporphyrinogen-III. This is Uroporphyrinogen decarboxylase from Streptomyces griseus subsp. griseus (strain JCM 4626 / CBS 651.72 / NBRC 13350 / KCC S-0626 / ISP 5235).